Here is a 101-residue protein sequence, read N- to C-terminus: Citrate lyase acyl carrier protein (101 aa).

Position 14 is an O-(phosphoribosyl dephospho-coenzyme A)serine (serine 14).

This sequence belongs to the CitD family. As to quaternary structure, oligomer with a subunit composition of (alpha,beta,gamma)6.

Its subcellular location is the cytoplasm. In terms of biological role, covalent carrier of the coenzyme of citrate lyase. This Lacticaseibacillus casei (strain BL23) (Lactobacillus casei) protein is Citrate lyase acyl carrier protein.